The sequence spans 827 residues: Villin-1 (827 aa).

The tract at residues 1-126 (MTKLNAQVKG…IRKGGVASGM (126 aa)) is necessary for homodimerization. A core region spans residues 1 to 734 (MTKLNAQVKG…YDDLKAELGN (734 aa)). Residues 27–76 (MQMVPVPSSTFGSFFDGDCYVVLAIHKTSSTLSYDIHYWIGQDSSQDEQG) form a Gelsolin-like 1 repeat. LPA/PIP2-binding site regions lie at residues 112–119 (KQGLVIRK) and 138–146 (RLLHVKGKR). Gelsolin-like repeat units follow at residues 148–188 (VLAG…MERL) and 265–309 (LVVR…QERS). A Phosphoserine modification is found at serine 366. Gelsolin-like repeat units follow at residues 407 to 457 (DLEL…DEIA), 528 to 568 (TKAF…DERE), and 631 to 672 (FLAT…EEKK). Residues serine 735 and serine 776 each carry the phosphoserine modification. The segment at 735-827 (SGDWSQIADE…QNIKKEKGLF (93 aa)) is headpiece. The HP domain occupies 761–827 (SGPLPTFPLE…QNIKKEKGLF (67 aa)). The segment at 816–824 (KQQNIKKEK) is LPA/PIP2-binding site 3.

Belongs to the villin/gelsolin family. Monomer. Homodimer; homodimerization is necessary for actin-bundling. Associates with F-actin; phosphorylation at tyrosine residues decreases the association with F-actin. Interacts (phosphorylated at C-terminus tyrosine phosphorylation sites) with PLCG1 (via the SH2 domains). Interacts (phosphorylated form) with PLCG1; the interaction is enhanced by hepatocyte growth factor (HGF). Post-translationally, phosphorylated on tyrosine residues by SRC. The unphosphorylated form increases the initial rate of actin-nucleating activity, whereas the tyrosine phosphorylated form inhibits actin-nucleating activity, enhances actin-bundling activity and enhances actin-severing activity by reducing high Ca(2+) requirements. The tyrosine phosphorylated form does not regulate actin-capping activity. Tyrosine phosphorylation is essential for cell migration: tyrosine phosphorylation sites in the N-terminus half regulate actin reorganization and cell morphology, whereas tyrosine phosphorylation sites in the C-terminus half regulate cell migration via interaction with PLCG1. Tyrosine phosphorylation is induced by epidermal growth factor (EGF) and stimulates cell migration. Expressed in small intestin, colon, kidney and enterocytes (at protein level).

It localises to the cytoplasm. Its subcellular location is the cytoskeleton. The protein resides in the cell projection. It is found in the microvillus. The protein localises to the lamellipodium. It localises to the ruffle. Its subcellular location is the filopodium tip. The protein resides in the filopodium. In terms of biological role, epithelial cell-specific Ca(2+)-regulated actin-modifying protein that modulates the reorganization of microvillar actin filaments. Plays a role in the actin nucleation, actin filament bundle assembly, actin filament capping and severing. Binds phosphatidylinositol 4,5-bisphosphate (PIP2) and lysophosphatidic acid (LPA); binds LPA with higher affinity than PIP2. Binding to LPA increases its phosphorylation by SRC and inhibits all actin-modifying activities. Binding to PIP2 inhibits actin-capping and -severing activities but enhances actin-bundling activity. Regulates the intestinal epithelial cell morphology, cell invasion, cell migration and apoptosis. Protects against apoptosis induced by dextran sodium sulfate (DSS) in the gastrointestinal epithelium. Appears to regulate cell death by maintaining mitochondrial integrity. Enhances hepatocyte growth factor (HGF)-induced epithelial cell motility, chemotaxis and wound repair. Upon S.flexneri cell infection, its actin-severing activity enhances actin-based motility of the bacteria and plays a role during the dissemination. This chain is Villin-1 (Vil1), found in Mus musculus (Mouse).